A 720-amino-acid chain; its full sequence is Long chain acyl-CoA synthetase 8 (720 aa).

At M1 the chain carries N-acetylmethionine. Residue 279 to 290 coordinates ATP; it reads IMFTSGSTGLPK. A fatty acid-binding region spans residues 554–582; it reads DEKGTRWFYTGDIGRFHPDGCLEVIDRKK.

Belongs to the ATP-dependent AMP-binding enzyme family. The cofactor is Mg(2+).

It catalyses the reaction a long-chain fatty acid + ATP + CoA = a long-chain fatty acyl-CoA + AMP + diphosphate. It functions in the pathway lipid metabolism; fatty acid metabolism. Its function is as follows. Activation of long-chain fatty acids for both synthesis of cellular lipids, and degradation via beta-oxidation. Preferentially uses palmitate, palmitoleate, oleate and linoleate. The chain is Long chain acyl-CoA synthetase 8 (LACS8) from Arabidopsis thaliana (Mouse-ear cress).